A 331-amino-acid chain; its full sequence is Pseudouridylate synthase TRUB2, mitochondrial (331 aa).

The Nucleophile role is filled by Asp-98. Residues 309 to 331 form a disordered region; the sequence is STGQPWGLKDPSSTLELESCSGQ. The span at 319-331 shows a compositional bias: polar residues; it reads PSSTLELESCSGQ.

This sequence belongs to the pseudouridine synthase TruB family. In terms of assembly, forms a regulatory protein-RNA complex, consisting of RCC1L, NGRN, RPUSD3, RPUSD4, TRUB2, FASTKD2 and 16S mt-rRNA.

Its subcellular location is the mitochondrion matrix. It catalyses the reaction a uridine in mRNA = a pseudouridine in mRNA. The catalysed reaction is uridine(55) in tRNA = pseudouridine(55) in tRNA. Functionally, minor enzyme contributing to the isomerization of uridine to pseudouridine (pseudouridylation) of specific mitochondrial mRNAs (mt-mRNAs) such as COXI and COXIII mt-mRNAs. As a component of a functional protein-RNA module, consisting of RCC1L, NGRN, RPUSD3, RPUSD4, TRUB2, FASTKD2 and 16S mitochondrial ribosomal RNA (16S mt-rRNA), controls 16S mt-rRNA abundance and is required for intra-mitochondrial translation. Also catalyzes pseudouridylation of some tRNAs, including synthesis of pseudouridine(55) from uracil-55, in the psi GC loop of a subset of tRNAs. This is Pseudouridylate synthase TRUB2, mitochondrial from Mus musculus (Mouse).